We begin with the raw amino-acid sequence, 820 residues long: Serine/threonine-protein phosphatase 4 regulatory subunit 3-B (820 aa).

The region spanning 1–100 is the WH1 domain; that stretch reads MSDTRRRVKV…DEIWEKICQV (100 aa). The segment covering 682–694 has biased composition (acidic residues); that stretch reads ELWFNEDDEEEGE. Disordered stretches follow at residues 682-711 and 750-820; these read ELWF…DFPE and AANG…RLGS. The span at 701 to 711 shows a compositional bias: basic and acidic residues; the sequence is EKTKPEDDFPE. Composition is skewed to polar residues over residues 750–761 and 768–790; these read AANGANSTNSKS and PATS…STKG. Residues 798 to 809 are compositionally biased toward acidic residues; that stretch reads YPDDEDEEEEED.

This sequence belongs to the SMEK family. In terms of assembly, serine/threonine-protein phosphatase 4 (PP4) occurs in different assemblies of the catalytic and one or more regulatory subunits.

Regulatory subunit of serine/threonine-protein phosphatase 4 (PP4). This Xenopus laevis (African clawed frog) protein is Serine/threonine-protein phosphatase 4 regulatory subunit 3-B.